The following is a 236-amino-acid chain: Purine nucleoside phosphorylase DeoD-type (236 aa).

A purine D-ribonucleoside is bound at residue His-5. Residues Gly-21, Arg-25, Arg-44, and Arg-88–Thr-91 contribute to the phosphate site. A purine D-ribonucleoside contacts are provided by residues Glu-180–Glu-182 and Ser-204–Asp-205. Asp-205 serves as the catalytic Proton donor.

The protein belongs to the PNP/UDP phosphorylase family. Homohexamer; trimer of homodimers.

It carries out the reaction a purine D-ribonucleoside + phosphate = a purine nucleobase + alpha-D-ribose 1-phosphate. It catalyses the reaction a purine 2'-deoxy-D-ribonucleoside + phosphate = a purine nucleobase + 2-deoxy-alpha-D-ribose 1-phosphate. Catalyzes the reversible phosphorolytic breakdown of the N-glycosidic bond in the beta-(deoxy)ribonucleoside molecules, with the formation of the corresponding free purine bases and pentose-1-phosphate. In Shewanella baltica (strain OS155 / ATCC BAA-1091), this protein is Purine nucleoside phosphorylase DeoD-type.